We begin with the raw amino-acid sequence, 201 residues long: Small ribosomal subunit protein uS4 (201 aa).

The disordered stretch occupies residues 22 to 47 (TGKELARRPYAPGDHGNDRRGKLSEY). The S4 RNA-binding domain occupies 93 to 153 (RRLDNMVYRL…EKSKNLDVIK (61 aa)).

The protein belongs to the universal ribosomal protein uS4 family. As to quaternary structure, part of the 30S ribosomal subunit. Contacts protein S5. The interaction surface between S4 and S5 is involved in control of translational fidelity.

Its function is as follows. One of the primary rRNA binding proteins, it binds directly to 16S rRNA where it nucleates assembly of the body of the 30S subunit. Functionally, with S5 and S12 plays an important role in translational accuracy. This Limosilactobacillus fermentum (strain NBRC 3956 / LMG 18251) (Lactobacillus fermentum) protein is Small ribosomal subunit protein uS4.